Consider the following 376-residue polypeptide: 26S proteasome non-ATPase regulatory subunit 13 (376 aa).

A PCI domain is found at 171-338 (SYYKDALRFL…KRVHMTWVQP (168 aa)). An N6-acetyllysine modification is found at Lys-298.

This sequence belongs to the proteasome subunit S11 family. Component of the 19S proteasome regulatory particle complex. The 26S proteasome consists of a 20S core particle (CP) and two 19S regulatory subunits (RP). The regulatory particle is made of a lid composed of 9 subunits including PSMD13, a base containing 6 ATPases and few additional components.

Functionally, component of the 26S proteasome, a multiprotein complex involved in the ATP-dependent degradation of ubiquitinated proteins. This complex plays a key role in the maintenance of protein homeostasis by removing misfolded or damaged proteins, which could impair cellular functions, and by removing proteins whose functions are no longer required. Therefore, the proteasome participates in numerous cellular processes, including cell cycle progression, apoptosis, or DNA damage repair. In Homo sapiens (Human), this protein is 26S proteasome non-ATPase regulatory subunit 13 (PSMD13).